Here is a 273-residue protein sequence, read N- to C-terminus: Formamidopyrimidine-DNA glycosylase (273 aa).

Pro2 serves as the catalytic Schiff-base intermediate with DNA. Glu3 serves as the catalytic Proton donor. The active-site Proton donor; for beta-elimination activity is the Lys57. DNA is bound by residues His91, Arg110, and Lys151. Residues 236-270 (QVYGRKDEACNDCGTIIEAKVIGQRNSYFCPHCQM) form an FPG-type zinc finger. Arg260 (proton donor; for delta-elimination activity) is an active-site residue.

Belongs to the FPG family. As to quaternary structure, monomer. Zn(2+) is required as a cofactor.

The enzyme catalyses Hydrolysis of DNA containing ring-opened 7-methylguanine residues, releasing 2,6-diamino-4-hydroxy-5-(N-methyl)formamidopyrimidine.. It carries out the reaction 2'-deoxyribonucleotide-(2'-deoxyribose 5'-phosphate)-2'-deoxyribonucleotide-DNA = a 3'-end 2'-deoxyribonucleotide-(2,3-dehydro-2,3-deoxyribose 5'-phosphate)-DNA + a 5'-end 5'-phospho-2'-deoxyribonucleoside-DNA + H(+). Its function is as follows. Involved in base excision repair of DNA damaged by oxidation or by mutagenic agents. Acts as a DNA glycosylase that recognizes and removes damaged bases. Has a preference for oxidized purines, such as 7,8-dihydro-8-oxoguanine (8-oxoG). Has AP (apurinic/apyrimidinic) lyase activity and introduces nicks in the DNA strand. Cleaves the DNA backbone by beta-delta elimination to generate a single-strand break at the site of the removed base with both 3'- and 5'-phosphates. The polypeptide is Formamidopyrimidine-DNA glycosylase (Actinobacillus pleuropneumoniae serotype 5b (strain L20)).